Here is a 672-residue protein sequence, read N- to C-terminus: Penicillin-binding protein activator LpoA (672 aa).

An N-terminal signal peptide occupies residues 1–26 (MLPFHLVRTQAGRVIPVLLAALFLAG). C27 carries the N-palmitoyl cysteine lipid modification. C27 carries the S-diacylglycerol cysteine lipid modification. The tract at residues 298–336 (APPTDTAQAGQVTPSSDGQNAQSPAPYSDQAVASTTPAP) is disordered. The span at 305–322 (QAGQVTPSSDGQNAQSPA) shows a compositional bias: polar residues. Residues 327–336 (QAVASTTPAP) are compositionally biased toward low complexity.

The protein belongs to the LpoA family. As to quaternary structure, interacts with PBP1a.

The protein resides in the cell outer membrane. Functionally, regulator of peptidoglycan synthesis that is essential for the function of penicillin-binding protein 1A (PBP1a). The polypeptide is Penicillin-binding protein activator LpoA (Pectobacterium parmentieri (strain WPP163) (Pectobacterium wasabiae (strain WPP163))).